Reading from the N-terminus, the 338-residue chain is 1-aminocyclopropane-1-carboxylate deaminase (338 aa).

At Lys-51 the chain carries N6-(pyridoxal phosphate)lysine. Ser-78 acts as the Nucleophile in catalysis.

This sequence belongs to the ACC deaminase/D-cysteine desulfhydrase family. As to quaternary structure, homotrimer. It depends on pyridoxal 5'-phosphate as a cofactor.

The catalysed reaction is 1-aminocyclopropane-1-carboxylate + H2O = 2-oxobutanoate + NH4(+). Its function is as follows. Catalyzes a cyclopropane ring-opening reaction, the irreversible conversion of 1-aminocyclopropane-1-carboxylate (ACC) to ammonia and alpha-ketobutyrate. Allows growth on ACC as a nitrogen source. The polypeptide is 1-aminocyclopropane-1-carboxylate deaminase (Paracidovorax citrulli (strain AAC00-1) (Acidovorax citrulli)).